Consider the following 670-residue polypeptide: Solute carrier organic anion transporter family member 1A2 (670 aa).

Residues 1–20 (MGETEKRIETHRIRCLSKLK) are Cytoplasmic-facing. Residues 21-40 (MFLLAITCAFVSKTLSGSYM) traverse the membrane as a helical segment. The Extracellular portion of the chain corresponds to 41 to 59 (NSMLTQIERQFNIPTSLVG). A helical membrane pass occupies residues 60–80 (FINGSFEIGNLLLIIFVSYFG). Over 81–86 (TKLHRP) the chain is Cytoplasmic. The chain crosses the membrane as a helical span at residues 87 to 111 (IMIGIGCVVMGLGCFLKSLPHFLMN). Residues 112-155 (QYEYESTVSVSGNLSSNSFLCMENGTQILRPTQDPSECTKEVKS) are Extracellular-facing. 2 N-linked (GlcNAc...) asparagine glycosylation sites follow: asparagine 124 and asparagine 135. The chain crosses the membrane as a helical span at residues 156 to 184 (LMWVYVLVGNIVRGMGETPILPLGISYIE). Topologically, residues 185-203 (DFAKFENSPLYIGLVETGA) are cytoplasmic. Residues 204–224 (IIGPLIGLLLASFCANVYVDT) form a helical membrane-spanning segment. The Extracellular portion of the chain corresponds to 225-242 (GFVNTDDLIITPTDTRWV). Residues 243–267 (GAWWFGFLICAGVNVLTAIPFFFLP) traverse the membrane as a helical segment. Residues 268 to 311 (NTLPKEGLETNADIIKNENEDKQKEEVKKEKYGITKDFLPFMKS) are Cytoplasmic-facing. A helical transmembrane segment spans residues 312 to 333 (LSCNPIYMLFILVSVIQFNAFV). Topologically, residues 334–353 (NMISFMPKYLEQQYGISSSD) are extracellular. Residues 354 to 377 (AIFLMGIYNLPPICIGYIIGGLIM) traverse the membrane as a helical segment. Residues 378–381 (KKFK) lie on the Cytoplasmic side of the membrane. The helical transmembrane segment at 382-405 (ITVKQAAHIGCWLSLLEYLLYFLS) threads the bilayer. At 406 to 513 (FLMTCENSSV…PDCSLMLQYF (108 aa)) the chain is on the extracellular side. 2 N-linked (GlcNAc...) asparagine glycosylation sites follow: asparagine 412 and asparagine 419. A Kazal-like domain is found at 433 to 488 (NDIFADCNVDCNCPSKIWDPVCGNNGLSYLSACLAGCETSIGTGINMVFQNCSCIQ). Cystine bridges form between cysteine 439-cysteine 469, cysteine 445-cysteine 465, and cysteine 454-cysteine 486. Residues 514–536 (LILSAMSSFIYSLAAIPGYMVLL) traverse the membrane as a helical segment. Over 537-545 (RCMKSEEKS) the chain is Cytoplasmic. Residues 546 to 571 (LGVGLHTFCTRVFAGIPAPIYFGALM) form a helical membrane-spanning segment. The Extracellular portion of the chain corresponds to 572-605 (DSTCLHWGTLKCGESGACRIYDSTTFRYIYLGLP). A helical transmembrane segment spans residues 606–623 (AALRGSSFVPALIILILL). At 624 to 670 (RKCHLPGENASSGTELIETKVKGKENECKDIYQKSTVLKDDELKTKL) the chain is on the cytoplasmic side.

The protein belongs to the organo anion transporter (TC 2.A.60) family. In terms of tissue distribution, higher expression in the brain than in liver and kidney. Expressed in brain neurons in both cortex and hippocampus. Expressed in placental trophoblasts. Also expressed in lung and testes at lower levels. Expressed in the eye (at protein level). Expressed in the retina in the outer and inner nuclear layers, the inner plexiform layer and the ganglion cell layer. Expressed in liver and prostate. In testis, primarily localized to the basal membrane of Sertoli cells and weakly expressed in Leydig cells and within the tubules. Expressed in fetal brain and liver.

It localises to the cell membrane. It is found in the basal cell membrane. It catalyses the reaction taurocholate(out) = taurocholate(in). It carries out the reaction glycocholate(out) = glycocholate(in). The catalysed reaction is taurochenodeoxycholate(out) = taurochenodeoxycholate(in). The enzyme catalyses tauroursodeoxycholate(out) = tauroursodeoxycholate(in). It catalyses the reaction dehydroepiandrosterone 3-sulfate(out) = dehydroepiandrosterone 3-sulfate(in). It carries out the reaction estrone 3-sulfate(out) = estrone 3-sulfate(in). The catalysed reaction is 3,3',5'-triiodo-L-thyronine(out) = 3,3',5'-triiodo-L-thyronine(in). The enzyme catalyses L-thyroxine(out) = L-thyroxine(in). It catalyses the reaction taurodeoxycholate(out) = taurodeoxycholate(in). It carries out the reaction glycodeoxycholate(out) = glycodeoxycholate(in). The catalysed reaction is glycochenodeoxycholate(out) = glycochenodeoxycholate(in). The enzyme catalyses glycoursodeoxycholate(out) = glycoursodeoxycholate(in). It catalyses the reaction 17beta-estradiol 17-O-(beta-D-glucuronate)(out) = 17beta-estradiol 17-O-(beta-D-glucuronate)(in). It carries out the reaction prostaglandin E2(out) = prostaglandin E2(in). The catalysed reaction is substance P(out) = substance P(in). With respect to regulation, transport activity is inhibited by the grapefruit juice component naringin. Its function is as follows. Na(+)-independent transporter that mediates the cellular uptake of a broad range of organic anions such as the endogenous bile salts cholate and deoxycholate, either in their unconjugated or conjugated forms (taurocholate and glycocholate), at the plasmam membrane. Responsible for intestinal absorption of bile acids. Transports dehydroepiandrosterone 3-sulfate (DHEAS), a major circulating steroid secreted by the adrenal cortex, as well as estrone 3-sulfate and 17beta-estradiol 17-O-(beta-D-glucuronate). Mediates apical uptake of all-trans-retinol (atROL) across human retinal pigment epithelium, which is essential to maintaining the integrity of the visual cycle and thus vision. Involved in the uptake of clinically used drugs. Capable of thyroid hormone transport (both T3 or 3,3',5'-triiodo-L-thyronine, and T4 or L-tyroxine). Also transports prostaglandin E2. Plays roles in blood-brain and -cerebrospinal fluid barrier transport of organic anions and signal mediators, and in hormone uptake by neural cells. May also play a role in the reuptake of neuropeptides such as substance P/TAC1 and vasoactive intestinal peptide/VIP released from retinal neurons. May play an important role in plasma and tissue distribution of the structurally diverse chemotherapeutic drugs methotrexate and paclitaxel. Shows a pH-sensitive substrate specificity which may be ascribed to the protonation state of the binding site and leads to a stimulation of substrate transport in an acidic microenvironment. Hydrogencarbonate/HCO3(-) acts as the probable counteranion that exchanges for organic anions. May contribute to regulate the transport of organic compounds in testis across the blood-testis-barrier. The polypeptide is Solute carrier organic anion transporter family member 1A2 (SLCO1A2) (Homo sapiens (Human)).